A 522-amino-acid chain; its full sequence is Alanine aminotransferase 2 (522 aa).

N6-(pyridoxal phosphate)lysine is present on Lys340. N6-acetyllysine is present on residues Lys414, Lys504, and Lys511.

The protein belongs to the class-I pyridoxal-phosphate-dependent aminotransferase family. Alanine aminotransferase subfamily. Homodimer. Requires pyridoxal 5'-phosphate as cofactor. As to expression, specifically induced in fatty liver. Highly expressed in muscle, liver and white adipose tissue. Moderately expressed in brain and kidney and expressed at low levels in the heart.

It carries out the reaction L-alanine + 2-oxoglutarate = pyruvate + L-glutamate. It functions in the pathway amino-acid degradation; L-alanine degradation via transaminase pathway; pyruvate from L-alanine: step 1/1. Catalyzes the reversible transamination between alanine and 2-oxoglutarate to form pyruvate and glutamate. This chain is Alanine aminotransferase 2 (Gpt2), found in Mus musculus (Mouse).